The sequence spans 247 residues: Geranylgeranylglyceryl phosphate synthase (247 aa).

2 residues coordinate Mg(2+): D23 and S52. Sn-glycerol 1-phosphate is bound by residues 171–177, 203–204, and 225–226; these read YLEAGSG, GG, and GT.

Belongs to the GGGP/HepGP synthase family. Group II subfamily. Mg(2+) serves as cofactor.

Its subcellular location is the cytoplasm. It catalyses the reaction sn-glycerol 1-phosphate + (2E,6E,10E)-geranylgeranyl diphosphate = sn-3-O-(geranylgeranyl)glycerol 1-phosphate + diphosphate. The protein operates within membrane lipid metabolism; glycerophospholipid metabolism. Prenyltransferase that catalyzes the transfer of the geranylgeranyl moiety of geranylgeranyl diphosphate (GGPP) to the C3 hydroxyl of sn-glycerol-1-phosphate (G1P). This reaction is the first ether-bond-formation step in the biosynthesis of archaeal membrane lipids. This chain is Geranylgeranylglyceryl phosphate synthase, found in Methanosarcina mazei (strain ATCC BAA-159 / DSM 3647 / Goe1 / Go1 / JCM 11833 / OCM 88) (Methanosarcina frisia).